Reading from the N-terminus, the 457-residue chain is uncharacterized protein (457 aa).

A run of 12 helical transmembrane segments spans residues 18-38, 44-64, 101-121, 158-178, 188-208, 228-248, 273-293, 294-314, 316-336, 355-375, 396-416, and 433-453; these read VMTVAGATVGFGATWRFPYLV, GAYVLLFCIAMIVIGIPMILV, MGLLGAFGIMAYYMVLGGWVI, IIFYTLLFVIVNYIILAKGII, LMPLLFIFLIGMVIRNVTLPG, LFIFVLGQVFFALSLGFGVLI, IIAVLAGFMIFPSLFTFGIEP, NAGPTLVFQSLPIVFSHLWAG, FFAIIFFGLLLIAALTTSITI, AIVLTLSGIFLLGNIPAILGD, SGNILFMLTALGCAIFVGFVL, and IKIWFNYVKFVVPLIILVIFI.

It belongs to the sodium:neurotransmitter symporter (SNF) (TC 2.A.22) family.

Its subcellular location is the cell membrane. Putative sodium-dependent transporter. This is an uncharacterized protein from Haemophilus influenzae (strain ATCC 51907 / DSM 11121 / KW20 / Rd).